Consider the following 98-residue polypeptide: uncharacterized protein (98 aa).

It belongs to the YciI family. As to quaternary structure, homodimer.

This is an uncharacterized protein from Haemophilus influenzae (strain ATCC 51907 / DSM 11121 / KW20 / Rd).